The primary structure comprises 452 residues: Isocitrate dehydrogenase [NADP], mitochondrial (452 aa).

A mitochondrion-targeting transit peptide spans Met-1–Tyr-39. 4 positions are modified to N6-acetyllysine: Lys-45, Lys-48, Lys-67, and Lys-69. Lys-80 and Lys-106 each carry N6-acetyllysine; alternate. An N6-succinyllysine; alternate mark is found at Lys-80 and Lys-106. NADP(+)-binding positions include Thr-115–Thr-117 and Arg-122. Thr-117 provides a ligand contact to D-threo-isocitrate. Residues Ser-134–Arg-140 and Arg-149 contribute to the D-threo-isocitrate site. Lys-155 carries the post-translational modification N6-acetyllysine. Lys-166 bears the N6-acetyllysine; alternate mark. Position 166 is an N6-succinyllysine; alternate (Lys-166). Residue Arg-172 coordinates D-threo-isocitrate. 2 positions are modified to N6-acetyllysine; alternate: Lys-180 and Lys-193. An N6-succinyllysine; alternate mark is found at Lys-180 and Lys-193. Residue Lys-199 is modified to N6-acetyllysine. The residue at position 256 (Lys-256) is an N6-acetyllysine; alternate. An N6-succinyllysine; alternate modification is found at Lys-256. N6-acetyllysine is present on residues Lys-263, Lys-272, Lys-275, and Lys-280. Lys-282 is modified (N6-acetyllysine; alternate). Residue Lys-282 is modified to N6-succinyllysine; alternate. Asp-291 lines the Mn(2+) pocket. Residue Lys-299 coordinates NADP(+). Residue Asp-314 coordinates Mn(2+). Residues Gly-349–His-354 and Asn-367 each bind NADP(+). The residue at position 384 (Lys-384) is an N6-acetyllysine; alternate. At Lys-384 the chain carries N6-succinyllysine; alternate. An N6-acetyllysine mark is found at Lys-400, Lys-413, and Lys-442.

Belongs to the isocitrate and isopropylmalate dehydrogenases family. In terms of assembly, homodimer. Mg(2+) is required as a cofactor. It depends on Mn(2+) as a cofactor. In terms of processing, acetylation at Lys-413 dramatically reduces catalytic activity. Deacetylated by SIRT3.

Its subcellular location is the mitochondrion. The catalysed reaction is D-threo-isocitrate + NADP(+) = 2-oxoglutarate + CO2 + NADPH. In terms of biological role, plays a role in intermediary metabolism and energy production. It may tightly associate or interact with the pyruvate dehydrogenase complex. The protein is Isocitrate dehydrogenase [NADP], mitochondrial (IDH2) of Homo sapiens (Human).